The sequence spans 552 residues: Metal transporter Nramp6.1 (552 aa).

Asn11 carries N-linked (GlcNAc...) asparagine glycosylation. A run of 7 helical transmembrane segments spans residues 55-75 (FLSY…PGNL), 88-108 (ELLW…SLAA), 133-155 (CLWL…GTAF), 159-181 (ILFN…LLLG), 189-209 (KLEL…FGEM), 238-258 (IALL…ALVL), and 275-295 (YFLI…LAVI). N-linked (GlcNAc...) asparagine glycosylation is present at Asn306. 5 helical membrane-spanning segments follow: residues 338-358 (IYAI…TYAG), 377-397 (LVTR…GGSS), 402-422 (LIII…IPLL), 438-458 (IYII…NIYY), and 478-498 (VFIG…VIYL). Residues 511–552 (PNKNDPQQQTNMENGLAKSTEGPEMVDRAPYREDLADIPLPE) are disordered. A compositionally biased stretch (polar residues) spans 514–523 (NDPQQQTNME). Basic and acidic residues predominate over residues 535–545 (MVDRAPYREDL).

This sequence belongs to the NRAMP (TC 2.A.55) family.

The protein resides in the membrane. Functionally, probable divalent metal transporter. The polypeptide is Metal transporter Nramp6.1 (Populus trichocarpa (Western balsam poplar)).